The following is a 133-amino-acid chain: Small ribosomal subunit protein uS8 (133 aa).

It belongs to the universal ribosomal protein uS8 family. Part of the 30S ribosomal subunit. Contacts proteins S5 and S12.

In terms of biological role, one of the primary rRNA binding proteins, it binds directly to 16S rRNA central domain where it helps coordinate assembly of the platform of the 30S subunit. The protein is Small ribosomal subunit protein uS8 of Prochlorococcus marinus (strain MIT 9515).